We begin with the raw amino-acid sequence, 160 residues long: Phosphopantetheine adenylyltransferase (160 aa).

Ser8 is a binding site for substrate. Residues 8–9 and His16 each bind ATP; that span reads SF. Substrate contacts are provided by Lys40, Leu74, and Lys88. Residues 89 to 91, Glu99, and 124 to 130 each bind ATP; these read GLR and YSFVSST.

It belongs to the bacterial CoaD family. As to quaternary structure, homohexamer. Mg(2+) is required as a cofactor.

It is found in the cytoplasm. The enzyme catalyses (R)-4'-phosphopantetheine + ATP + H(+) = 3'-dephospho-CoA + diphosphate. Its pathway is cofactor biosynthesis; coenzyme A biosynthesis; CoA from (R)-pantothenate: step 4/5. Reversibly transfers an adenylyl group from ATP to 4'-phosphopantetheine, yielding dephospho-CoA (dPCoA) and pyrophosphate. This Thermus thermophilus (strain ATCC BAA-163 / DSM 7039 / HB27) protein is Phosphopantetheine adenylyltransferase.